A 256-amino-acid polypeptide reads, in one-letter code: Type II phosphatidylinositol 4,5-bisphosphate 4-phosphatase (256 aa).

Residues 1-10 (MAADGIDERS) are compositionally biased toward basic and acidic residues. Residues 1 to 25 (MAADGIDERSPLISPSSGNVTPTAP) are disordered. Over residues 13-22 (ISPSSGNVTP) the composition is skewed to polar residues. Cys106 is an active-site residue. Positions 106-112 (CKDISRR) match the CX5R motif motif. Helical transmembrane passes span 191–211 (CCTY…LTVG) and 226–246 (WAVA…WGAI).

It is found in the late endosome membrane. The protein localises to the lysosome membrane. It catalyses the reaction a 1,2-diacyl-sn-glycero-3-phospho-(1D-myo-inositol-4,5-bisphosphate) + H2O = a 1,2-diacyl-sn-glycero-3-phospho-(1D-myo-inositol-5-phosphate) + phosphate. Its function is as follows. Catalyzes the hydrolysis of phosphatidylinositol-4,5-bisphosphate (PtdIns-4,5-P2) to phosphatidylinositol-4-phosphate (PtdIns-4-P). In Xenopus laevis (African clawed frog), this protein is Type II phosphatidylinositol 4,5-bisphosphate 4-phosphatase.